Reading from the N-terminus, the 326-residue chain is Vitamin B12 import system permease protein BtuC (326 aa).

Transmembrane regions (helical) follow at residues 15–35 (WLLCLSVLMLLALLLSLCAGE), 61–81 (LAVLLVGAALAISGAVMQALF), 88–108 (PGLLGVSNGAGVGLIAAVLLG), 112–132 (LPNWALGLCAIAGALIITLIL), 146–166 (LLAGVALGIICSALMTWAIYF), 184–204 (GGVDWRQSWLMLALIPVLLWI), 240–260 (GWMVGVSVALAGAIGFIGLVI), 274–294 (VLLPGCALAGASALLLADVVA), and 302–322 (ELPIGVVTATLGAPVFIWLLL).

It belongs to the binding-protein-dependent transport system permease family. FecCD subfamily. The complex is composed of two ATP-binding proteins (BtuD), two transmembrane proteins (BtuC) and a solute-binding protein (BtuF).

Its subcellular location is the cell inner membrane. Its function is as follows. Part of the ABC transporter complex BtuCDF involved in vitamin B12 import. Involved in the translocation of the substrate across the membrane. The chain is Vitamin B12 import system permease protein BtuC from Escherichia coli (strain SE11).